A 394-amino-acid chain; its full sequence is Flavohemoprotein (394 aa).

One can recognise a Globin domain in the interval 1-136; sequence MLSENTINIV…LANVFIQREE (136 aa). A heme b-binding site is contributed by His-85. Catalysis depends on charge relay system residues Tyr-95 and Glu-135. The reductase stretch occupies residues 147–394; sequence GGWRGLREFE…YECFGPHKVV (248 aa). An FAD-binding FR-type domain is found at 150–255; the sequence is RGLREFELVE…AAPAGDFFLD (106 aa). FAD-binding positions include Tyr-188 and 204-207; that span reads RQYS. 268-273 serves as a coordination point for NADP(+); sequence GVGLTP. 387 to 390 is an FAD binding site; it reads CFGP.

This sequence belongs to the globin family. Two-domain flavohemoproteins subfamily. The protein in the C-terminal section; belongs to the flavoprotein pyridine nucleotide cytochrome reductase family. Requires heme b as cofactor. FAD is required as a cofactor.

The catalysed reaction is 2 nitric oxide + NADPH + 2 O2 = 2 nitrate + NADP(+) + H(+). The enzyme catalyses 2 nitric oxide + NADH + 2 O2 = 2 nitrate + NAD(+) + H(+). Is involved in NO detoxification in an aerobic process, termed nitric oxide dioxygenase (NOD) reaction that utilizes O(2) and NAD(P)H to convert NO to nitrate, which protects the bacterium from various noxious nitrogen compounds. Therefore, plays a central role in the inducible response to nitrosative stress. This chain is Flavohemoprotein, found in Vibrio vulnificus (strain YJ016).